A 46-amino-acid polypeptide reads, in one-letter code: Lantibiotic streptin (46 aa).

A propeptide spanning residues 1–24 is cleaved from the precursor; sequence MNNTIKDFDLDLKTNKKDTATPYV.

It belongs to the type A lantibiotic family. In terms of processing, maturation of lantibiotics involves the enzymatic conversion of Thr, and Ser into dehydrated AA and the formation of thioether bonds with cysteine. This is followed by membrane translocation and cleavage of the modified precursor.

In terms of biological role, lanthionine-containing peptide antibiotic (lantibiotic) active on certain Gram-positive bacteria. The bactericidal activity of lantibiotics is based on depolarization of energized bacterial cytoplasmic membranes, initiated by the formation of aqueous transmembrane pores. The chain is Lantibiotic streptin (srtA) from Streptococcus pyogenes serotype M1.